The chain runs to 438 residues: Forkhead box protein J1 (438 aa).

Residues 123–217 (KPPYSYATLI…MNGAMKKRRL (95 aa)) constitute a DNA-binding region (fork-head).

The protein belongs to the FOXJ1 family.

The protein localises to the nucleus. Functionally, key transcription factor required for motile ciliogenesis. Activates genes essential for motile cilia formation and function. This chain is Forkhead box protein J1, found in Xenopus tropicalis (Western clawed frog).